A 199-amino-acid polypeptide reads, in one-letter code: Transmembrane protein 223 (199 aa).

Topologically, residues 1–43 (MVASVPLRNVSHLLSVLRSQNVPRYLQNGVPRDVLLFRHERGR) are mitochondrial matrix. Residues 44-64 (FFAILGLFCAGQGIFWTSLAV) form a helical membrane-spanning segment. Residues 65–94 (AALSRPLSRVPAEAPNRSYQDLRSALWRYG) are Mitochondrial intermembrane-facing. Residues 95 to 115 (LAVGCGTMGVLVLGAGLLYSL) form a helical membrane-spanning segment. The Mitochondrial matrix portion of the chain corresponds to 116 to 199 (RSVRSVMLLA…DNTVGAYRSL (84 aa)).

Belongs to the TMEM223 family. Associates with the mitochondrial ribosome.

The protein localises to the mitochondrion inner membrane. Functionally, mitochondrial ribosome-associated protein involved in the first steps of cytochrome c oxidase complex (complex IV) biogenesis. Stimulates the translation of MT-CO1 mRNA and is a constituent of early MT-CO1 assembly intermediates. This Mus musculus (Mouse) protein is Transmembrane protein 223.